A 26-amino-acid polypeptide reads, in one-letter code: Delta-hemolysin (26 aa).

Met1 is subject to N-formylmethionine.

The protein belongs to the delta-lysin family.

It is found in the secreted. The protein localises to the host cell membrane. Lyses erythrocytes and many other mammalian cells. The polypeptide is Delta-hemolysin (hld) (Staphylococcus aureus (strain MSSA476)).